An 806-amino-acid polypeptide reads, in one-letter code: Fibroblast growth factor receptor 3 (806 aa).

Positions 1–19 (MRAAWGSVWCLCLAAAVGA) are cleaved as a signal peptide. At 20 to 364 (LPAARRRGAE…ELMEMDDSGS (345 aa)) the chain is on the extracellular side. The Ig-like C2-type 1 domain maps to 24–124 (RRRGAERSGG…VLGNFTVRVT (101 aa)). C61 and C107 are joined by a disulfide. N-linked (GlcNAc...) asparagine glycans are attached at residues N83, N96, and N118. The segment at 121-146 (VRVTDSPSSGDDEDDDDESEDTGVPF) is disordered. A compositionally biased stretch (acidic residues) spans 130–141 (GDDEDDDDESED). Ig-like C2-type domains are found at residues 150–238 (PDKM…YQLD) and 247–349 (PILQ…AWLT). An intrachain disulfide couples C170 to C222. N-linked (GlcNAc...) asparagine glycans are attached at residues N219, N256, N288, N309, and N322. C269 and C333 are oxidised to a cystine. A helical membrane pass occupies residues 365–389 (VYAGILSYGTGLVLFILVLVIVIIC). The Cytoplasmic portion of the chain corresponds to 390–806 (RMKMPNKKAM…HVPCNGVIRT (417 aa)). Positions 466 to 755 (LTLGKPLGEG…LTMTSTDEYL (290 aa)) constitute a Protein kinase domain. ATP contacts are provided by residues 472-480 (LGEGCFGQV) and K502. D611 (proton acceptor) is an active-site residue. 4 positions are modified to phosphotyrosine; by autocatalysis: Y641, Y642, Y718, and Y754.

This sequence belongs to the protein kinase superfamily. Tyr protein kinase family. Fibroblast growth factor receptor subfamily. In terms of assembly, monomer. Homodimer after ligand binding. In terms of processing, autophosphorylated. Binding of FGF family members together with heparan sulfate proteoglycan or heparin promotes receptor dimerization and autophosphorylation on tyrosine residues. Autophosphorylation occurs in trans between the two FGFR molecules present in the dimer.

Its subcellular location is the cell membrane. The enzyme catalyses L-tyrosyl-[protein] + ATP = O-phospho-L-tyrosyl-[protein] + ADP + H(+). Present in an inactive conformation in the absence of bound ligand. Ligand binding leads to dimerization and activation by autophosphorylation on tyrosine residues. Functionally, tyrosine-protein kinase that acts as a cell-surface receptor for fibroblast growth factors and plays an essential role in the regulation of cell proliferation, differentiation and apoptosis. Plays an essential role in the regulation of chondrocyte differentiation, proliferation and apoptosis, and is required for normal skeleton development. Regulates both osteogenesis and postnatal bone mineralization by osteoblasts. Promotes apoptosis in chondrocytes, but can also promote cancer cell proliferation. Phosphorylates PLCG1, CBL and FRS2. Ligand binding leads to the activation of several signaling cascades. Activation of PLCG1 leads to the production of the cellular signaling molecules diacylglycerol and inositol 1,4,5-trisphosphate. Phosphorylation of FRS2 triggers recruitment of GRB2, GAB1, PIK3R1 and SOS1, and mediates activation of RAS, MAPK1/ERK2, MAPK3/ERK1 and the MAP kinase signaling pathway, as well as of the AKT1 signaling pathway. The protein is Fibroblast growth factor receptor 3 (FGFR3) of Gallus gallus (Chicken).